We begin with the raw amino-acid sequence, 419 residues long: UDP-N-acetylglucosamine 1-carboxyvinyltransferase (419 aa).

Lys22–Asn23 contributes to the phosphoenolpyruvate binding site. Position 91 (Arg91) interacts with UDP-N-acetyl-alpha-D-glucosamine. Cys115 (proton donor) is an active-site residue. 2-(S-cysteinyl)pyruvic acid O-phosphothioketal is present on Cys115. UDP-N-acetyl-alpha-D-glucosamine is bound by residues Arg120–Leu124, Lys160–Val163, Asp305, and Val327.

This sequence belongs to the EPSP synthase family. MurA subfamily.

It is found in the cytoplasm. It carries out the reaction phosphoenolpyruvate + UDP-N-acetyl-alpha-D-glucosamine = UDP-N-acetyl-3-O-(1-carboxyvinyl)-alpha-D-glucosamine + phosphate. It functions in the pathway cell wall biogenesis; peptidoglycan biosynthesis. Its function is as follows. Cell wall formation. Adds enolpyruvyl to UDP-N-acetylglucosamine. The sequence is that of UDP-N-acetylglucosamine 1-carboxyvinyltransferase from Escherichia fergusonii (strain ATCC 35469 / DSM 13698 / CCUG 18766 / IAM 14443 / JCM 21226 / LMG 7866 / NBRC 102419 / NCTC 12128 / CDC 0568-73).